The following is a 20-amino-acid chain: Unknown protein from 2D-PAGE (20 aa).

The sequence is that of Unknown protein from 2D-PAGE from Nicotiana tabacum (Common tobacco).